The primary structure comprises 79 residues: uncharacterized protein (79 aa).

This is an uncharacterized protein from Escherichia coli O6:H1 (strain CFT073 / ATCC 700928 / UPEC).